We begin with the raw amino-acid sequence, 368 residues long: Probable endopolygalacturonase I (368 aa).

The N-terminal stretch at 1 to 18 (MHSFQLLGLAALGSLVAA) is a signal peptide. The propeptide occupies 19–31 (APSPSRVSDLTER). An intrachain disulfide couples Cys-35 to Cys-50. PbH1 repeat units follow at residues 162–192 (ANNL…DISE), 193–214 (SNGV…AINS), 215–235 (GKNI…SIGS), 244–265 (VQGV…RIKT), 273–295 (VSDV…VIQQ), and 307–328 (SNGI…DSKA). Asp-207 (proton donor) is an active-site residue. A disulfide bridge connects residues Cys-209 and Cys-225. Residue His-229 is part of the active site. 2 disulfides stabilise this stretch: Cys-335/Cys-340 and Cys-359/Cys-368.

It belongs to the glycosyl hydrolase 28 family.

The protein localises to the secreted. It catalyses the reaction (1,4-alpha-D-galacturonosyl)n+m + H2O = (1,4-alpha-D-galacturonosyl)n + (1,4-alpha-D-galacturonosyl)m.. In terms of biological role, involved in maceration and soft-rotting of plant tissue. Hydrolyzes the 1,4-alpha glycosidic bonds of de-esterified pectate in the smooth region of the plant cell wall. The polypeptide is Probable endopolygalacturonase I (pgaI) (Aspergillus terreus (strain NIH 2624 / FGSC A1156)).